Consider the following 711-residue polypeptide: Ribosomal RNA large subunit methyltransferase K/L (711 aa).

Residues 42-153 (DAQRAVLWSR…KGRATISVDL (112 aa)) form the THUMP domain.

This sequence belongs to the methyltransferase superfamily. RlmKL family.

The protein localises to the cytoplasm. The catalysed reaction is guanosine(2445) in 23S rRNA + S-adenosyl-L-methionine = N(2)-methylguanosine(2445) in 23S rRNA + S-adenosyl-L-homocysteine + H(+). It carries out the reaction guanosine(2069) in 23S rRNA + S-adenosyl-L-methionine = N(2)-methylguanosine(2069) in 23S rRNA + S-adenosyl-L-homocysteine + H(+). Specifically methylates the guanine in position 2445 (m2G2445) and the guanine in position 2069 (m7G2069) of 23S rRNA. The chain is Ribosomal RNA large subunit methyltransferase K/L from Xanthomonas campestris pv. campestris (strain 8004).